A 268-amino-acid polypeptide reads, in one-letter code: GTP cyclohydrolase FolE2 (268 aa).

The protein belongs to the GTP cyclohydrolase IV family.

The enzyme catalyses GTP + H2O = 7,8-dihydroneopterin 3'-triphosphate + formate + H(+). It participates in cofactor biosynthesis; 7,8-dihydroneopterin triphosphate biosynthesis; 7,8-dihydroneopterin triphosphate from GTP: step 1/1. In terms of biological role, converts GTP to 7,8-dihydroneopterin triphosphate. The protein is GTP cyclohydrolase FolE2 of Methylococcus capsulatus (strain ATCC 33009 / NCIMB 11132 / Bath).